The sequence spans 232 residues: Enolase-phosphatase E1 (232 aa).

It belongs to the HAD-like hydrolase superfamily. MasA/MtnC family. In terms of assembly, monomer. It depends on Mg(2+) as a cofactor.

It catalyses the reaction 5-methylsulfanyl-2,3-dioxopentyl phosphate + H2O = 1,2-dihydroxy-5-(methylsulfanyl)pent-1-en-3-one + phosphate. Its pathway is amino-acid biosynthesis; L-methionine biosynthesis via salvage pathway; L-methionine from S-methyl-5-thio-alpha-D-ribose 1-phosphate: step 3/6. It participates in amino-acid biosynthesis; L-methionine biosynthesis via salvage pathway; L-methionine from S-methyl-5-thio-alpha-D-ribose 1-phosphate: step 4/6. Bifunctional enzyme that catalyzes the enolization of 2,3-diketo-5-methylthiopentyl-1-phosphate (DK-MTP-1-P) into the intermediate 2-hydroxy-3-keto-5-methylthiopentenyl-1-phosphate (HK-MTPenyl-1-P), which is then dephosphorylated to form the acireductone 1,2-dihydroxy-3-keto-5-methylthiopentene (DHK-MTPene). The protein is Enolase-phosphatase E1 of Sorangium cellulosum (strain So ce56) (Polyangium cellulosum (strain So ce56)).